A 537-amino-acid polypeptide reads, in one-letter code: Bifunctional purine biosynthesis protein PurH (537 aa).

The MGS-like domain maps to 8-158; it reads IPAPDLVPVR…KNHAYVAVVT (151 aa).

Belongs to the PurH family.

The enzyme catalyses (6R)-10-formyltetrahydrofolate + 5-amino-1-(5-phospho-beta-D-ribosyl)imidazole-4-carboxamide = 5-formamido-1-(5-phospho-D-ribosyl)imidazole-4-carboxamide + (6S)-5,6,7,8-tetrahydrofolate. It catalyses the reaction IMP + H2O = 5-formamido-1-(5-phospho-D-ribosyl)imidazole-4-carboxamide. Its pathway is purine metabolism; IMP biosynthesis via de novo pathway; 5-formamido-1-(5-phospho-D-ribosyl)imidazole-4-carboxamide from 5-amino-1-(5-phospho-D-ribosyl)imidazole-4-carboxamide (10-formyl THF route): step 1/1. It functions in the pathway purine metabolism; IMP biosynthesis via de novo pathway; IMP from 5-formamido-1-(5-phospho-D-ribosyl)imidazole-4-carboxamide: step 1/1. The sequence is that of Bifunctional purine biosynthesis protein PurH from Chelativorans sp. (strain BNC1).